The following is a 444-amino-acid chain: Phosphoglucosamine mutase (444 aa).

Residue Ser-102 is the Phosphoserine intermediate of the active site. The Mg(2+) site is built by Ser-102, Asp-239, Asp-241, and Asp-243. The residue at position 102 (Ser-102) is a Phosphoserine.

It belongs to the phosphohexose mutase family. Mg(2+) serves as cofactor. Activated by phosphorylation.

The catalysed reaction is alpha-D-glucosamine 1-phosphate = D-glucosamine 6-phosphate. Its function is as follows. Catalyzes the conversion of glucosamine-6-phosphate to glucosamine-1-phosphate. This is Phosphoglucosamine mutase from Saccharopolyspora erythraea (strain ATCC 11635 / DSM 40517 / JCM 4748 / NBRC 13426 / NCIMB 8594 / NRRL 2338).